A 62-amino-acid polypeptide reads, in one-letter code: MEQRKCYFCGQMLEPGTGKLYIKKDGSTYFMCSSKCMSNFALGRLPRRTEWTEKGKIQLKKA.

Residues C6, C9, C32, and C36 each contribute to the Zn(2+) site. The C4-type zinc-finger motif lies at 6–36; that stretch reads CYFCGQMLEPGTGKLYIKKDGSTYFMCSSKC.

This sequence belongs to the eukaryotic ribosomal protein eL24 family. As to quaternary structure, part of the 50S ribosomal subunit. Forms a cluster with proteins L3 and L14. Zn(2+) is required as a cofactor.

In terms of biological role, binds to the 23S rRNA. This is Large ribosomal subunit protein eL24 from Methanosarcina mazei (strain ATCC BAA-159 / DSM 3647 / Goe1 / Go1 / JCM 11833 / OCM 88) (Methanosarcina frisia).